We begin with the raw amino-acid sequence, 1000 residues long: C-module-binding factor A (1000 aa).

The region spanning 113–280 (PREWQEYLSH…ISYFSSLPHT (168 aa)) is the JmjC domain. A PHD-type; atypical zinc finger spans residues 489 to 544 (KIKCHRCEKRFKKFSIIFCTNCNARFCEQCVVNTFGQNFQVLMKRNEWECFCCKGL). Residues 492-542 (CHRCEKRFKKFSIIFCTNCNARFCEQCVVNTFGQNFQVLMKRNEWECFCCK) form an RING-type; degenerate zinc finger. Disordered regions lie at residues 561 to 647 (RILN…SSYS) and 660 to 818 (SYGS…KNLK). Composition is skewed to low complexity over residues 574–647 (NNNN…SSYS), 660–683 (SYGS…NNNN), 700–710 (SSSSGSGSSNS), 732–751 (NNNN…NNHH), and 760–789 (NNNN…STST). Basic and acidic residues predominate over residues 805 to 818 (DNDKPKGRPPKNLK). The a.T hook DNA-binding region spans 810-818 (KGRPPKNLK).

As to quaternary structure, monomer.

Its subcellular location is the nucleus. Transcriptional regulator involved in phagocytosis and pinocytosis. Both activates and represses transcription. Regulates expression of acaA, carA, pkaC, csaA, cotB and lagC. Promotes amplification of the tRNA gene-associated retrotransposon TRE5-A, a mobile genetic element formerly called as Dictyostelium repetitive element (DRE). Suppresses agnC and agnE encoding argonaute proteins which are part of a RNA interference pathway controlling TRE5-A amplification. Required for amplification of both sense and antisense RNA transcripts, but does not activate their promoters found in A-module and C-module of the TRE5-A, respectively. Nevertheless, binds to distinct DNA sequences containing A and T stretches within the C-module in vitro. The sequence is that of C-module-binding factor A from Dictyostelium discoideum (Social amoeba).